A 164-amino-acid polypeptide reads, in one-letter code: C-type lectin 1 (164 aa).

A signal peptide spans 1-23 (MGRFLFASLGLLVVAFSLSGTGA). 3 cysteine pairs are disulfide-bonded: C27-C38, C55-C154, and C129-C146. A C-type lectin domain is found at 34–155 (YNVSCYKLFY…CTLLHPFLCQ (122 aa)). 2 N-linked (GlcNAc...) asparagine glycosylation sites follow: N35 and N109. The short motif at 119 to 121 (EPN) is the Mannose-binding element. Residues E127, N142, and D143 each contribute to the Ca(2+) site.

It belongs to the true venom lectin family. Expressed by the venom gland.

It is found in the secreted. In terms of biological role, mannose-binding lectin which recognizes specific carbohydrate structures and agglutinates a variety of animal cells by binding to cell-surface glycoproteins and glycolipids. May be a calcium-dependent lectin. The protein is C-type lectin 1 of Hydrophis hardwickii (Hardwick's spine-bellied seasnake).